We begin with the raw amino-acid sequence, 378 residues long: Putative F-box only protein 15 (378 aa).

The 48-residue stretch at 5–52 (KRVYRSLPFELVEEILKKTPAESLNRFKSTCKQWYGIITSKRFMYNHL) folds into the F-box domain.

In Arabidopsis thaliana (Mouse-ear cress), this protein is Putative F-box only protein 15 (FBX15).